A 126-amino-acid chain; its full sequence is Profilin-3 (126 aa).

Belongs to the profilin family. Occurs in many kinds of cells as a complex with monomeric actin in a 1:1 ratio.

The protein resides in the cytoplasm. Its subcellular location is the cytoskeleton. Its function is as follows. Binds to actin and affects the structure of the cytoskeleton. At high concentrations, profilin prevents the polymerization of actin, whereas it enhances it at low concentrations. By binding to PIP2, it inhibits the formation of IP3 and DG. This is Profilin-3 (proC) from Dictyostelium discoideum (Social amoeba).